The chain runs to 358 residues: Chorismate synthase (358 aa).

Arg-47 serves as a coordination point for NADP(+). FMN-binding positions include Arg-124 to Ser-126, Asn-240 to Ala-241, Gly-284, Lys-299 to Thr-303, and Arg-325.

Belongs to the chorismate synthase family. Homotetramer. FMNH2 is required as a cofactor.

The catalysed reaction is 5-O-(1-carboxyvinyl)-3-phosphoshikimate = chorismate + phosphate. It functions in the pathway metabolic intermediate biosynthesis; chorismate biosynthesis; chorismate from D-erythrose 4-phosphate and phosphoenolpyruvate: step 7/7. Catalyzes the anti-1,4-elimination of the C-3 phosphate and the C-6 proR hydrogen from 5-enolpyruvylshikimate-3-phosphate (EPSP) to yield chorismate, which is the branch point compound that serves as the starting substrate for the three terminal pathways of aromatic amino acid biosynthesis. This reaction introduces a second double bond into the aromatic ring system. This Phocaeicola vulgatus (strain ATCC 8482 / DSM 1447 / JCM 5826 / CCUG 4940 / NBRC 14291 / NCTC 11154) (Bacteroides vulgatus) protein is Chorismate synthase.